Reading from the N-terminus, the 421-residue chain is NADH-quinone oxidoreductase subunit F (421 aa).

Position 54–63 (54–63 (GRGGAGFSTG)) interacts with NAD(+). Residue 166–213 (GAGAYICGEETALLESLEGKKGMPRLKPPFPAGFGLYGCPTTINNVES) coordinates FMN. [4Fe-4S] cluster-binding residues include Cys-344, Cys-347, Cys-350, and Cys-390.

Belongs to the complex I 51 kDa subunit family. FMN serves as cofactor. Requires [4Fe-4S] cluster as cofactor.

The enzyme catalyses a quinone + NADH + 5 H(+)(in) = a quinol + NAD(+) + 4 H(+)(out). In terms of biological role, NDH-1 shuttles electrons from NADH, via FMN and iron-sulfur (Fe-S) centers, to quinones in the respiratory chain. Couples the redox reaction to proton translocation (for every two electrons transferred, four hydrogen ions are translocated across the cytoplasmic membrane), and thus conserves the redox energy in a proton gradient. This chain is NADH-quinone oxidoreductase subunit F (nuoF), found in Rickettsia rickettsii (strain Sheila Smith).